We begin with the raw amino-acid sequence, 353 residues long: uncharacterized protein (353 aa).

Residues 267–287 form a helical membrane-spanning segment; sequence GLPLVVIEAMAFGLPIVAFNC.

Belongs to the glycosyltransferase group 1 family. Glycosyltransferase 4 subfamily.

The protein resides in the membrane. This is an uncharacterized protein from Haemophilus influenzae (strain ATCC 51907 / DSM 11121 / KW20 / Rd).